The following is a 346-amino-acid chain: Arsenite methyltransferase (346 aa).

Belongs to the methyltransferase superfamily. Arsenite methyltransferase family.

It carries out the reaction arsenic triglutathione + [thioredoxin]-dithiol + S-adenosyl-L-methionine + 2 H2O = methylarsonous acid + [thioredoxin]-disulfide + 3 glutathione + S-adenosyl-L-homocysteine + H(+). It catalyses the reaction arsenic triglutathione + 2 [thioredoxin]-dithiol + 2 S-adenosyl-L-methionine + H2O = dimethylarsinous acid + 2 [thioredoxin]-disulfide + 3 glutathione + 2 S-adenosyl-L-homocysteine + 2 H(+). The catalysed reaction is arsenic triglutathione + 3 [thioredoxin]-dithiol + 3 S-adenosyl-L-methionine = trimethylarsine + 3 [thioredoxin]-disulfide + 3 glutathione + 3 S-adenosyl-L-homocysteine + 3 H(+). Catalyzes the transfer of a methyl group from AdoMet to arsenite, producing methylated arsenicals. Involved in the conversion of As(III) to dimethylarsenate as the main product in the medium and also produces dimethylarsine and trimethylarsine gases. Reduces the arsenic toxicity in the cell and may contribute to the global arsenic cycling. This Aquipseudomonas alcaligenes (strain ATCC 14909 / DSM 50342 / CCUG 1425 / JCM 20561 / NBRC 14159 / NCIMB 9945 / NCTC 10367 / 1577) (Pseudomonas alcaligenes) protein is Arsenite methyltransferase.